The following is a 492-amino-acid chain: Gamma-aminobutyric acid receptor subunit alpha-3 (492 aa).

Positions 1 to 28 (MIITQTSHCYMTSLGILFLINILPGTTG) are cleaved as a signal peptide. Positions 28 to 54 (GQGESRRQEPGDFVKQDIGGLSPKHAP) are disordered. The Extracellular portion of the chain corresponds to 29–274 (QGESRRQEPG…MTTHFHLKRK (246 aa)). Basic and acidic residues predominate over residues 31–42 (ESRRQEPGDFVK). N-linked (GlcNAc...) asparagine glycosylation occurs at Asn-63. Arg-119 provides a ligand contact to 4-aminobutanoate. Residues Asn-163 and Asn-176 are each glycosylated (N-linked (GlcNAc...) asparagine). Residue Thr-182 coordinates 4-aminobutanoate. Cys-191 and Cys-205 form a disulfide bridge. The N-linked (GlcNAc...) asparagine glycan is linked to Asn-228. A helical membrane pass occupies residues 275–295 (IGYFVIQTYLPCIMTVILSQV). Residues 296-305 (SFWLNRESVP) are Cytoplasmic-facing. The chain crosses the membrane as a helical span at residues 306-325 (ARTVFGVTTVLTMTTLSISA). The Extracellular portion of the chain corresponds to 326–336 (RNSLPKVAYAT). The chain crosses the membrane as a helical span at residues 337–357 (AMDWFIAVCYAFVFSALIEFA). The Cytoplasmic segment spans residues 358–457 (TVNYFTKRSW…TYNSVSKVDK (100 aa)). A Phosphoserine modification is found at Ser-426. Thr-427 is subject to Phosphothreonine. Phosphoserine occurs at positions 433 and 442. The chain crosses the membrane as a helical span at residues 458–478 (ISRIIFPVLFAIFNLVYWATY). The Extracellular portion of the chain corresponds to 479-492 (VNRESAIKGMIRKQ).

This sequence belongs to the ligand-gated ion channel (TC 1.A.9) family. Gamma-aminobutyric acid receptor (TC 1.A.9.5) subfamily. GABRA3 sub-subfamily. As to quaternary structure, heteropentamer, formed by a combination of alpha (GABRA1-6), beta (GABRB1-3), gamma (GABRG1-3), delta (GABRD), epsilon (GABRE), rho (GABRR1-3), pi (GABRP) and theta (GABRQ) chains, each subunit exhibiting distinct physiological and pharmacological properties. Binds UBQLN1. Interacts with GPHN.

It localises to the postsynaptic cell membrane. Its subcellular location is the cell membrane. It carries out the reaction chloride(in) = chloride(out). With respect to regulation, potentiated by etomidate, propofol, pregnanolone and flurazepam. In terms of biological role, alpha subunit of the heteropentameric ligand-gated chloride channel gated by gamma-aminobutyric acid (GABA), a major inhibitory neurotransmitter in the brain. GABA-gated chloride channels, also named GABA(A) receptors (GABAAR), consist of five subunits arranged around a central pore and contain GABA active binding site(s) located at the alpha and beta subunit interface(s). When activated by GABA, GABAARs selectively allow the flow of chloride anions across the cell membrane down their electrochemical gradient. Chloride influx into the postsynaptic neuron following GABAAR opening decreases the neuron ability to generate a new action potential, thereby reducing nerve transmission. The sequence is that of Gamma-aminobutyric acid receptor subunit alpha-3 from Homo sapiens (Human).